The following is a 2144-amino-acid chain: EDQVSYTLAITARDNGIPQKSDTTYLEILVNDVNDNAPQFLRDSYQGSVYEDVPPFTSVLQISATDRDSGLNGRVFYTFQGGDDGDGDFIVESTSGIVRTLRRLDRENVAQYILRAYAVDKGMPPARTPMEVTVTVLDVNDNPPVFEQDEFDVFVEENSPIGLAVARVTATDPDEGTNAQIMYQIVEGNIPEVFQLDIFSGELTALVDLDYEDRPEYILVIQATSAPLVSRATVHVRLLDRNDNPPVLGNFEILFNNYVTNRSSSFPGGAIGRVPAHDPDISDSLTYSFERGNELSLVLLNASTGELRLSRALDNNRPLEAIMSVLVSDGVHSVTAQCSLRVTIITDEMLTHSITLRLEDMSPERFLSPLLGLFIQAVAATLATPPDHVVVFNVQRDTDAPGGHILNVSLSVGQPPGPGGGPPFLPSEDLQERLYLNRSLLTAISAQRVLPFDDNICLREPCENYMRCVSVLRFDSSAPFIASSSVLFRPIHPVGGLRCRCPPGFTGDYCETEVDLCYSRPCGPHGHCRSREGGYTCLCRDGYTGEHCEVSARSGRCTPGVCKNGGTCVNLLVGGFKCDCPSGDFEKPFCQVTTRSFPARSFITFRGLRQRFHFTLALSFATKERDGLLLYNGRFNEKHDFVALEVIQEQVQLTFSAGESTTTVSPFVPGGVSDGQWHTVQLKYYNKPLLGQTGLPQGPSEQKVAVVSVDGCDTGVALRFGAMLGNYSCAAQGTQGGSKKSLDLTGPLLLGGVPDLPESFPVRMRHFVGCMKNLQVDSRHVDMADFIANNGTVPGCPTKKNVCDSNTCHNGGTCVNQWDAFSCECPLGFGGKSCAQEMANPQRFLGSSLVAWHGLSLPISQPWHLSLMFRTRQADGVLLQAVTRGRSTITLQLRAGHVVLSVEGTGLQASSLRLEPGRANDGDWHHAQLSLGASGGPGHAILSFDYGQQKAEGNLGPRLHGLHLSNMTVGGVPGPASSVARGFRGCLQGVRVSETPEGVSSLDPSRGESINVEPGCSWPDPCDSNPCPTNSYCSNDWDSYSCSCDPGYYGDNCTNVCDLNPCEHQSACTRKPSAPHGYICECLPNYLGPYCETRIDQPCPRGWWGHPTCGPCNCDVSKGFDPDCNKTSGECHCKENHYRPPSSPTCLLCDCYPTGSLSRVCDPEDGQCPCKPGVIGRQCDRCDNPFAEVTTNGCEVNYDSCPRAIEAGIWWPRTRFGLPAAAPCPKGSFGTAVRHCDEHRGWLPPNLFNCTSVTFSELKGFAERLQRNESGLDSGRSQRLALLLRNATQHTSGYFGSDVKVAYQLATRLLAHESAQRGFGLSATQDVHFTENLLRVGSALLDAANKRHWELIQQTEGGTAWLLQHYEAYASALAQNMRHTYLSPFTIVTPNIVISVVRLDKGNFAGTKLPRYEALRGERPPDLETTVILPESVFREMPPMVRSAGPGEAQETEELARRQRRHPELSQGEAVASVIIYHTLAGLLPHNYDPDKRSLRVPKRPVINTPVVSISVHDDEELLPRALDKPVTVQFRLLETEERTKPICVFWNHSILVSGTGGWSARGCEVVFRNESHVSCQCNHMTSFAVLMDVSRRENGEILPLKTLTYVALGVTLAALMITFLFLTLLRALRSNQHGIRRNLTAALGLAQLVFLLGINQADLPFACTVIAILLHFLYLCTFSWALLEALHLYRALTEVRDVNASPMRFYYMLGWGVPAFITGLAVGLDPEGYGNPDFCWLSIYDTLIWSFAGPVAFAVSMSVFLYILSARASCAAQRQGFEKKGPVSGLRSSFTVLLLLSATWLLALLSVNSDTLLFHYLFAACNCVQGPFIFLSYVVLSKEVRKALKFACSRKPSPDPALTTKSTLTSSYNCPSPYADGRLYQPYGDSAGSLHSASRSGKSQPSYIPFLLREESTLNPGQVPPGLGDPSGLFMEGQAQQHDPDTDSDSDLSLEDDQSGSYASTHSSDSEEEEEEAAFPGEQGWDSLLGPGAERLPLHSTPKDGGPGSGKVPWPGDFGTTTKENSGSGPLEERPRENGDALTREGSLGPLPGPSTQPHKGILKKKCLPTISEKSSLLRLPLEQGTGSSRGSTASEGSRNGPPPRPPPRQSLQEQLNGVMPIAMSIKAGTVDEDSSGSEFLFFNFLH.

Cadherin domains are found at residues 1-40, 41-146, 147-248, and 253-371; these read EDQV…APQF, LRDS…PPVF, EQDE…PPVL, and ILFN…SPLL. Topologically, residues 1 to 1605 are extracellular; the sequence is EDQVSYTLAI…GEILPLKTLT (1605 aa). Residues asparagine 261, asparagine 301, asparagine 407, and asparagine 437 are each glycosylated (N-linked (GlcNAc...) asparagine). Residues 453 to 511 form the EGF-like 1; calcium-binding domain; that stretch reads DDNICLREPCENYMRCVSVLRFDSSAPFIASSSVLFRPIHPVGGLRCRCPPGFTGDYCE. Intrachain disulfides connect cysteine 457–cysteine 468, cysteine 462–cysteine 499, cysteine 501–cysteine 510, cysteine 517–cysteine 528, cysteine 522–cysteine 537, cysteine 539–cysteine 548, cysteine 557–cysteine 568, cysteine 562–cysteine 578, and cysteine 580–cysteine 590. Residues 513 to 549 enclose the EGF-like 2; calcium-binding domain; that stretch reads EVDLCYSRPCGPHGHCRSREGGYTCLCRDGYTGEHCE. The 39-residue stretch at 553-591 folds into the EGF-like 3; calcium-binding domain; that stretch reads RSGRCTPGVCKNGGTCVNLLVGGFKCDCPSGDFEKPFCQ. The Laminin G-like 1 domain maps to 592–796; the sequence is VTTRSFPARS…IANNGTVPGC (205 aa). 2 N-linked (GlcNAc...) asparagine glycosylation sites follow: asparagine 726 and asparagine 790. 4 disulfide bridges follow: cysteine 770–cysteine 796, cysteine 803–cysteine 814, cysteine 808–cysteine 823, and cysteine 825–cysteine 834. Residues 799-835 enclose the EGF-like 4; calcium-binding domain; sequence KKNVCDSNTCHNGGTCVNQWDAFSCECPLGFGGKSCA. Asparagine 816 is modified ((3R)-3-hydroxyasparagine). The region spanning 839–1016 is the Laminin G-like 2 domain; it reads ANPQRFLGSS…GESINVEPGC (178 aa). N-linked (GlcNAc...) asparagine glycosylation is present at asparagine 966. 14 disulfide bridges follow: cysteine 986–cysteine 1016, cysteine 1022–cysteine 1033, cysteine 1027–cysteine 1042, cysteine 1044–cysteine 1053, cysteine 1057–cysteine 1068, cysteine 1062–cysteine 1080, cysteine 1082–cysteine 1091, cysteine 1112–cysteine 1124, cysteine 1114–cysteine 1131, cysteine 1133–cysteine 1146, cysteine 1149–cysteine 1161, cysteine 1151–cysteine 1168, cysteine 1170–cysteine 1179, and cysteine 1182–cysteine 1194. One can recognise an EGF-like 5; calcium-binding domain in the interval 1018–1053; sequence WPDPCDSNPCPTNSYCSNDWDSYSCSCDPGYYGDNC. A (3R)-3-hydroxyasparagine modification is found at asparagine 1035. An N-linked (GlcNAc...) asparagine glycan is attached at asparagine 1052. In terms of domain architecture, EGF-like 6; calcium-binding spans 1054 to 1092; sequence TNVCDLNPCEHQSACTRKPSAPHGYICECLPNYLGPYCE. Positions 1108–1147 constitute an EGF-like 7; calcium-binding domain; it reads TCGPCNCDVSKGFDPDCNKTSGECHCKENHYRPPSSPTCL. An N-linked (GlcNAc...) asparagine glycan is attached at asparagine 1125. The Laminin EGF-like domain occupies 1149-1196; that stretch reads CDCYPTGSLSRVCDPEDGQCPCKPGVIGRQCDRCDNPFAEVTTNGCEV. 3 N-linked (GlcNAc...) asparagine glycosylation sites follow: asparagine 1249, asparagine 1268, and asparagine 1286. One can recognise a GAIN-B domain in the interval 1424 to 1594; the sequence is ETTVILPESV…AVLMDVSRRE (171 aa). The disordered stretch occupies residues 1439 to 1466; that stretch reads PMVRSAGPGEAQETEELARRQRRHPELS. Intrachain disulfides connect cysteine 1544–cysteine 1576 and cysteine 1564–cysteine 1578. The tract at residues 1544–1594 is GPS; it reads CVFWNHSILVSGTGGWSARGCEVVFRNESHVSCQCNHMTSFAVLMDVSRRE. N-linked (GlcNAc...) asparagine glycosylation is found at asparagine 1548 and asparagine 1570. The helical transmembrane segment at 1606–1626 threads the bilayer; that stretch reads YVALGVTLAALMITFLFLTLL. Residues 1627–1641 lie on the Cytoplasmic side of the membrane; that stretch reads RALRSNQHGIRRNLT. The chain crosses the membrane as a helical span at residues 1642-1662; sequence AALGLAQLVFLLGINQADLPF. Position 1663 (alanine 1663) is a topological domain, extracellular. A helical membrane pass occupies residues 1664–1684; sequence CTVIAILLHFLYLCTFSWALL. At 1685-1705 the chain is on the cytoplasmic side; it reads EALHLYRALTEVRDVNASPMR. Residues 1706–1726 form a helical membrane-spanning segment; it reads FYYMLGWGVPAFITGLAVGLD. The Extracellular portion of the chain corresponds to 1727–1744; sequence PEGYGNPDFCWLSIYDTL. Residues 1745 to 1765 form a helical membrane-spanning segment; the sequence is IWSFAGPVAFAVSMSVFLYIL. Over 1766–1789 the chain is Cytoplasmic; the sequence is SARASCAAQRQGFEKKGPVSGLRS. The chain crosses the membrane as a helical span at residues 1790–1810; sequence SFTVLLLLSATWLLALLSVNS. Topologically, residues 1811–1816 are extracellular; it reads DTLLFH. The helical transmembrane segment at 1817 to 1837 threads the bilayer; that stretch reads YLFAACNCVQGPFIFLSYVVL. Residues 1838–2144 are Cytoplasmic-facing; it reads SKEVRKALKF…SEFLFFNFLH (307 aa). A disordered region spans residues 1914-2109; that stretch reads TLNPGQVPPG…PPRPPPRQSL (196 aa). A compositionally biased stretch (acidic residues) spans 1943 to 1955; it reads TDSDSDLSLEDDQ. Residues 2016 to 2025 show a composition bias toward polar residues; the sequence is GTTTKENSGS. The segment covering 2028-2040 has biased composition (basic and acidic residues); sequence LEERPRENGDALT. Residues 2082 to 2095 are compositionally biased toward polar residues; it reads GTGSSRGSTASEGS.

The protein belongs to the G-protein coupled receptor 2 family. LN-TM7 subfamily. As to quaternary structure, heterodimer of 2 chains generated by proteolytic processing; the large extracellular N-terminal fragment and the membrane-bound C-terminal fragment predominantly remain associated and non-covalently linked. The iron and 2-oxoglutarate dependent 3-hydroxylation of aspartate and asparagine is (R) stereospecific within EGF domains. Post-translationally, autoproteolytically processed at the GPS region of the GAIN-B domain; this cleavage modulates receptor activity. In terms of tissue distribution, expressed in the brain. High expression in cerebellum and olfactory bulb. Weaker expression in cerebral cortex, hippocampus and brain stem.

It is found in the cell membrane. Receptor that may have an important role in cell/cell signaling during nervous system formation. This Rattus norvegicus (Rat) protein is Cadherin EGF LAG seven-pass G-type receptor 2.